The primary structure comprises 181 residues: Large ribosomal subunit protein uL5 (181 aa).

It belongs to the universal ribosomal protein uL5 family. Part of the 50S ribosomal subunit; part of the 5S rRNA/L5/L18/L25 subcomplex. Contacts the 5S rRNA and the P site tRNA. Forms a bridge to the 30S subunit in the 70S ribosome.

Its function is as follows. This is one of the proteins that bind and probably mediate the attachment of the 5S RNA into the large ribosomal subunit, where it forms part of the central protuberance. In the 70S ribosome it contacts protein S13 of the 30S subunit (bridge B1b), connecting the 2 subunits; this bridge is implicated in subunit movement. Contacts the P site tRNA; the 5S rRNA and some of its associated proteins might help stabilize positioning of ribosome-bound tRNAs. This chain is Large ribosomal subunit protein uL5, found in Desulforamulus reducens (strain ATCC BAA-1160 / DSM 100696 / MI-1) (Desulfotomaculum reducens).